The chain runs to 910 residues: Eukaryotic translation initiation factor 3 subunit C (910 aa).

A disordered region spans residues 1–21 (MSRFFANGSESESESSEEEIQ). Residues 11 to 20 (SESESSEEEI) show a composition bias toward acidic residues. A phosphoserine mark is found at serine 34, serine 165, serine 176, and serine 185. The interval 157-281 (FREAPDQESE…KRAEDDEDGE (125 aa)) is disordered. The segment covering 162–186 (DQESEAEDEVVALESDGGDAGDDSD) has biased composition (acidic residues). Residues 193 to 207 (EAAPKAVKSAPAKAA) show a composition bias toward low complexity. Residues 209–235 (ADDDDSDDSIDWDSDSESETESSDDEN) are compositionally biased toward acidic residues. Residues 240-268 (MRERFLKRTTEKEEKDDDKRKDKRKEQKT) show a composition bias toward basic and acidic residues. Residues 639–815 (FHMHINLELL…ETVGMHRSEP (177 aa)) form the PCI domain. Positions 847 to 910 (FFQRGNMGNR…QQQVQTIDEE (64 aa)) are disordered. The span at 862 to 874 (NRNQNNQGGNWLG) shows a compositional bias: low complexity. Residues 882–891 (RNRNQRGHHK) are compositionally biased toward basic residues. Residues 895–910 (DRQQQQQQQVQTIDEE) are compositionally biased toward low complexity.

Belongs to the eIF-3 subunit C family. As to quaternary structure, component of the eukaryotic translation initiation factor 3 (eIF-3) complex. The eIF-3 complex interacts with pix.

The protein localises to the cytoplasm. In terms of biological role, component of the eukaryotic translation initiation factor 3 (eIF-3) complex, which is involved in protein synthesis of a specialized repertoire of mRNAs and, together with other initiation factors, stimulates binding of mRNA and methionyl-tRNAi to the 40S ribosome. The eIF-3 complex specifically targets and initiates translation of a subset of mRNAs involved in cell proliferation. The protein is Eukaryotic translation initiation factor 3 subunit C of Drosophila sechellia (Fruit fly).